The primary structure comprises 664 residues: Glycine--tRNA ligase beta subunit (664 aa).

It belongs to the class-II aminoacyl-tRNA synthetase family. As to quaternary structure, tetramer of two alpha and two beta subunits.

It is found in the cytoplasm. The catalysed reaction is tRNA(Gly) + glycine + ATP = glycyl-tRNA(Gly) + AMP + diphosphate. The chain is Glycine--tRNA ligase beta subunit from Rickettsia conorii (strain ATCC VR-613 / Malish 7).